A 577-amino-acid chain; its full sequence is MSANQNPSVQEVLGEVLGPWSDNERLKRESHFLRGTIEQDLQDRITGGFTADNFQLIRFHGMYQQDDRDIRAERSKQKLEPLHNVMLRARMPGGIITPHQWLAIDKFATEHTLYGSIRLTTRQTFQFHGVLKPNIKLMHQTLNSIGIDSIATAGDVNRNVLCTSNPVESQLHLQAYEWAKKISEHLLPKTRAYAEIWLDGEKIEGPDEEPILGSNYLPRKFKTTVVIPPHNDVDVHANDLNFVAIGENGQLIGFNVLVGGGLAMTHGDTSTYPRRADDFGFIPLEKTLEVAAAVVSTQRDWGNRSNRKNAKTKYTLDRVGVEVFKAEVEKRAGITFAPSRAYEFTSRGDRIGWVEGIDGKHHLTLFIENGRILDFPGKPLKTGVAEIAKVHQGDFRMTANQNLIVAGVPADQKQQIEQLARSHGLIDDGVSEQRINSMACVAFPTCPLAMAEAERFLPSFVTEVEGILAKHALPKEENIILRVTGCPNGCGRAMLAEIGLVGKAPGRYNLHLGGNRNGTRIPKMYKENITDTQILQEIDELVGRWASERLDGEGFGDFTIRAGIIEEVIISKRDFYA.

The [4Fe-4S] cluster site is built by Cys440, Cys446, Cys486, and Cys490. Cys490 contacts siroheme.

Belongs to the nitrite and sulfite reductase 4Fe-4S domain family. In terms of assembly, alpha(8)-beta(8). The alpha component is a flavoprotein, the beta component is a hemoprotein. Siroheme is required as a cofactor. It depends on [4Fe-4S] cluster as a cofactor.

It catalyses the reaction hydrogen sulfide + 3 NADP(+) + 3 H2O = sulfite + 3 NADPH + 4 H(+). The protein operates within sulfur metabolism; hydrogen sulfide biosynthesis; hydrogen sulfide from sulfite (NADPH route): step 1/1. Component of the sulfite reductase complex that catalyzes the 6-electron reduction of sulfite to sulfide. This is one of several activities required for the biosynthesis of L-cysteine from sulfate. The chain is Sulfite reductase [NADPH] hemoprotein beta-component from Vibrio cholerae serotype O1 (strain ATCC 39541 / Classical Ogawa 395 / O395).